Here is a 307-residue protein sequence, read N- to C-terminus: Phosphonates import ATP-binding protein PhnC (307 aa).

The ABC transporter domain occupies isoleucine 4–alanine 252. Glycine 37–serine 44 provides a ligand contact to ATP. Residues alanine 265–arginine 275 show a composition bias toward basic and acidic residues. The segment at alanine 265–arginine 307 is disordered.

The protein belongs to the ABC transporter superfamily. Phosphonates importer (TC 3.A.1.9.1) family. In terms of assembly, the complex is composed of two ATP-binding proteins (PhnC), two transmembrane proteins (PhnE) and a solute-binding protein (PhnD).

Its subcellular location is the cell inner membrane. The catalysed reaction is phosphonate(out) + ATP + H2O = phosphonate(in) + ADP + phosphate + H(+). Functionally, part of the ABC transporter complex PhnCDE involved in phosphonates import. Responsible for energy coupling to the transport system. The protein is Phosphonates import ATP-binding protein PhnC of Burkholderia pseudomallei (strain 1710b).